We begin with the raw amino-acid sequence, 1215 residues long: Reverse gyrase 2 (1215 aa).

The RG N-terminal-type zinc-finger motif lies at Gly3–Pro44. Residues Cys13, Cys16, Cys31, and Cys34 each contribute to the Zn(2+) site. ATP is bound by residues Gln89 and Ala106–Ser113. Residues Ala93–Tyr249 enclose the Helicase ATP-binding domain. Residues Asp209 to Asp212 carry the DEAD box motif. The tract at residues Val614–Ala1215 is topoisomerase I. A Toprim domain is found at Thr618–Val783. Glu624 provides a ligand contact to Mg(2+). The segment at Ile702–Asp729 adopts an RG C-terminal-type zinc-finger fold. Zn(2+) contacts are provided by Cys705, Cys708, Cys719, and Cys722. Asp752 serves as a coordination point for Mg(2+). A Topo IA-type catalytic domain is found at Glu799 to Val1200. Tyr943 serves as the catalytic O-(5'-phospho-DNA)-tyrosine intermediate.

In the N-terminal section; belongs to the DEAD box helicase family. DDVD subfamily. This sequence in the C-terminal section; belongs to the type IA topoisomerase family. Monomer. It depends on Zn(2+) as a cofactor. Mg(2+) is required as a cofactor.

The protein resides in the cytoplasm. It carries out the reaction ATP + H2O = ADP + phosphate + H(+). Its function is as follows. Modifies the topological state of DNA by introducing positive supercoils in an ATP-dependent process, increasing the linking number in steps of +1. Binds to single-stranded DNA, transiently cleaves and then rejoins the ends, introducing a positive supercoil in the process. The scissile phosphodiester is attacked by the catalytic tyrosine of the enzyme, resulting in the formation of a DNA-(5'-phosphotyrosyl)-enzyme intermediate. Probably involved in rewinding DNA strands in regions of the chromosome that have opened up to allow replication, transcription, DNA repair and/or for DNA protection. The sequence is that of Reverse gyrase 2 from Aeropyrum pernix (strain ATCC 700893 / DSM 11879 / JCM 9820 / NBRC 100138 / K1).